Reading from the N-terminus, the 1927-residue chain is Integrin beta-like protein A (1927 aa).

The signal sequence occupies residues 1-20 (MNRILTLFILFISLFIVCEA). The Extracellular portion of the chain corresponds to 21-1860 (THFRFGTMSW…KENNNKTVLT (1840 aa)). N309 is a glycosylation site (N-linked (GlcNAc...) asparagine). Residues 425–462 (YGEKCDPVDPCVNGESNEGSQGNGKCTCYYGWEGKNCD) enclose the EGF-like domain. 2 disulfide bridges follow: C435–C450 and C452–C461. One can recognise a VWFA domain in the interval 522 to 709 (EVLVLVDSQP…VLSKAVVKAI (188 aa)). Residues N1122, N1516, N1717, N1723, and N1855 are each glycosylated (N-linked (GlcNAc...) asparagine). The chain crosses the membrane as a helical span at residues 1861 to 1881 (GAIAGAAAGAGLLAAGAWFLL). Residues 1882–1927 (KKSAPPTDAFFGEGAFADGAVSTNPMYEESGRSAINPLYEASSENL) are Cytoplasmic-facing.

It belongs to the SIB family. In terms of assembly, interacts with talA/talin.

Its subcellular location is the membrane. In terms of biological role, implicated in cellular adhesion to substrate or phagocytic particles. This chain is Integrin beta-like protein A (sibA), found in Dictyostelium discoideum (Social amoeba).